The primary structure comprises 135 residues: Holo-[acyl-carrier-protein] synthase (135 aa).

Mg(2+) is bound by residues aspartate 8 and glutamate 57.

The protein belongs to the P-Pant transferase superfamily. AcpS family. Mg(2+) is required as a cofactor.

Its subcellular location is the cytoplasm. The enzyme catalyses apo-[ACP] + CoA = holo-[ACP] + adenosine 3',5'-bisphosphate + H(+). Its function is as follows. Transfers the 4'-phosphopantetheine moiety from coenzyme A to a Ser of acyl-carrier-protein. The polypeptide is Holo-[acyl-carrier-protein] synthase (Methylobacterium sp. (strain 4-46)).